A 182-amino-acid polypeptide reads, in one-letter code: uncharacterized protein (182 aa).

A helical transmembrane segment spans residues 17–34 (LSLVLFAVLSVLPLGGCA). 2 TPR repeats span residues 89–122 (VDAAIRLTKALVAQKRPHEALQVLDNVLVVTPDN) and 123–156 (LRALNAKAVILDIEGRHDAAQELYRQALETNPEN).

The protein localises to the membrane. This is an uncharacterized protein from Sinorhizobium fredii (strain NBRC 101917 / NGR234).